The primary structure comprises 277 residues: Venom serine protease (277 aa).

An N-terminal signal peptide occupies residues 1 to 19 (MNCGKIILLFITIIGVAKS). Positions 34-269 (IVNGVETEIN…FMEFIHNATI (236 aa)) constitute a Peptidase S1 domain. A disulfide bridge links cysteine 60 with cysteine 76. Histidine 75 serves as the catalytic Charge relay system. N-linked (GlcNAc...) asparagine glycosylation is found at asparagine 84 and asparagine 104. Residue aspartate 126 is the Charge relay system of the active site. Asparagine 155 and asparagine 158 each carry an N-linked (GlcNAc...) asparagine glycan. 2 disulfides stabilise this stretch: cysteine 192-cysteine 207 and cysteine 216-cysteine 246. Asparagine 218 carries an N-linked (GlcNAc...) asparagine glycan. The active-site Charge relay system is serine 220. Asparagine 266 carries an N-linked (GlcNAc...) asparagine glycan.

It belongs to the peptidase S1 family. As to expression, expressed by the venom duct.

It is found in the secreted. The chain is Venom serine protease from Polistes dominula (European paper wasp).